Here is a 342-residue protein sequence, read N- to C-terminus: Dof zinc finger protein DOF4.6 (342 aa).

Positions 21-54 (NTCPKPQPQPLQPQQPPSVGGERKARPEKDQAVN) are disordered. Residues 25-36 (KPQPQPLQPQQP) are compositionally biased toward pro residues. Over residues 41–51 (GERKARPEKDQ) the composition is skewed to basic and acidic residues. Residues 53 to 107 (VNCPRCNSTNTKFCYYNNYSLTQPRYFCKGCRRYWTEGGSLRNIPVGGGSRKNKR) form a Dof-type zinc finger. Residues Cys55, Cys58, Cys80, and Cys83 each coordinate Zn(2+). Residues 94–136 (RNIPVGGGSRKNKRSHSSSSDISNNHSDSTQPATKKHLSDHHH) are disordered. Positions 110 to 122 (SSSSDISNNHSDS) are enriched in low complexity. The span at 127 to 136 (TKKHLSDHHH) shows a compositional bias: basic residues.

As to expression, accumulates in the stele.

Its subcellular location is the nucleus. Its function is as follows. Transcription factor that binds specifically to a 5'-AA[AG]G-3' consensus core sequence. This is Dof zinc finger protein DOF4.6 from Arabidopsis thaliana (Mouse-ear cress).